We begin with the raw amino-acid sequence, 136 residues long: Outer envelope pore protein 16-4, chloroplastic (136 aa).

The segment at 1–59 (MEEELLSAVPCSSLTVESVLRVATAGGLYGLCAGPRDARKIGLSGVSQASFVAKSIGRF) is contains 4 beta strands. The next 4 helical transmembrane spans lie at 18–34 (SVLR…LCAG), 56–72 (IGRF…VFTM), 86–102 (WVNA…AVAI), and 110–126 (VVGM…LANC).

The protein belongs to the Tim17/Tim22/Tim23 family. Plastid outer envelope porin OEP16 (TC 1.B.30) subfamily. In terms of assembly, homodimer and oligomers in membrane.

It localises to the plastid. Its subcellular location is the chloroplast outer membrane. Its function is as follows. Voltage-dependent high-conductance channel with a slight cation-selectivity; selective for amino acids but excludes triosephosphates or uncharged sugars. Non-essential amino acid-selective channel protein and translocation pore for NADPH:protochlorophyllide oxidoreductase A (PORA) and possibly PORB. This is Outer envelope pore protein 16-4, chloroplastic (OEP164) from Arabidopsis thaliana (Mouse-ear cress).